We begin with the raw amino-acid sequence, 281 residues long: Tryptophan synthase alpha chain (281 aa).

Catalysis depends on proton acceptor residues Glu49 and Asp60.

The protein belongs to the TrpA family. Tetramer of two alpha and two beta chains.

It catalyses the reaction (1S,2R)-1-C-(indol-3-yl)glycerol 3-phosphate + L-serine = D-glyceraldehyde 3-phosphate + L-tryptophan + H2O. It participates in amino-acid biosynthesis; L-tryptophan biosynthesis; L-tryptophan from chorismate: step 5/5. The alpha subunit is responsible for the aldol cleavage of indoleglycerol phosphate to indole and glyceraldehyde 3-phosphate. The polypeptide is Tryptophan synthase alpha chain (Methanocaldococcus jannaschii (strain ATCC 43067 / DSM 2661 / JAL-1 / JCM 10045 / NBRC 100440) (Methanococcus jannaschii)).